A 436-amino-acid chain; its full sequence is mRNA cap guanine-N(7) methyltransferase (436 aa).

Residues 1–50 are disordered; sequence MSTKPEKPIWMSQEDYDRQYGSITGDESSTVSKKDSKVTANAPGDGNGSL. The mRNA cap 0 methyltransferase domain maps to 141 to 424; that stretch reads SPIIKLRNFN…FYTMFAFRKV (284 aa). Residue 150 to 151 coordinates mRNA; the sequence is NN. The S-adenosyl-L-methionine site is built by Lys-154, Gly-172, Asp-194, Asp-223, Gln-249, and Tyr-254.

This sequence belongs to the class I-like SAM-binding methyltransferase superfamily. mRNA cap 0 methyltransferase family.

It localises to the nucleus. It catalyses the reaction a 5'-end (5'-triphosphoguanosine)-ribonucleoside in mRNA + S-adenosyl-L-methionine = a 5'-end (N(7)-methyl 5'-triphosphoguanosine)-ribonucleoside in mRNA + S-adenosyl-L-homocysteine. Functionally, responsible for methylating the 5'-cap structure of mRNAs. The chain is mRNA cap guanine-N(7) methyltransferase (ABD1) from Saccharomyces cerevisiae (strain ATCC 204508 / S288c) (Baker's yeast).